The primary structure comprises 193 residues: Protein PATRONUS 1 (193 aa).

The DEN-box signature appears at 14–16 (DEN). The short motif at 46 to 49 (RKAL) is the D-box element.

In terms of assembly, interacts directly with the anaphase promoting complex/cyclosome (APC/C) through the CDC27B and CDC20-1 subunits. Expressed in somatic and reproductive tissues. Expressed in inflorescence, young buds, roots and basal portion of young leaves. Expressed in proliferating cells such as apical meristems of roots and shoots, expanding cotyledons and leaves, root vascular tissues, and in stomatal precursor cells.

Its subcellular location is the nucleus. It is found in the cytoplasm. In terms of biological role, required for the maintenance of centromeric cohesion during interkinesis, until meiosis II. Required for regular configuration and segregation of sister chromatids in meiosis II. Also required for centromere cohesion during meiosis I. Involved in spindle organization at the end of telophase I and in meiosis II. Required to prevent precocious release of pericentromeric cohesins during meiosis, but not for cohesion establishment and monopolar orientation of kinetochores at meiosis I. Involved also in somatic development. Regulates mitotic cell division and ploidy stability in somatic cell types. May be involved in the organization of microtubules dynamics. Involved in abiotic stresses and mono- or divalent ions tolerance and may play a role in maintaining meristematic activity under saline conditions. PANS1 and GIG1 are part of a network linking centromere cohesion and cell cycle progression through control of APC/C activity. Regulates the number of dividing cells in root meristem and is necessary for the anaphase onset control through an APC/C-mediated pathway. Involved in maintaining correct chromosome arm cohesion under stress conditions. This chain is Protein PATRONUS 1, found in Arabidopsis thaliana (Mouse-ear cress).